An 87-amino-acid chain; its full sequence is Small ribosomal subunit protein uS15 (87 aa).

Positions 1–19 (MEKARKEQLIREYATHEGD) are enriched in basic and acidic residues. The tract at residues 1-22 (MEKARKEQLIREYATHEGDTGS) is disordered.

This sequence belongs to the universal ribosomal protein uS15 family. In terms of assembly, part of the 30S ribosomal subunit. Forms a bridge to the 50S subunit in the 70S ribosome, contacting the 23S rRNA.

Its function is as follows. One of the primary rRNA binding proteins, it binds directly to 16S rRNA where it helps nucleate assembly of the platform of the 30S subunit by binding and bridging several RNA helices of the 16S rRNA. In terms of biological role, forms an intersubunit bridge (bridge B4) with the 23S rRNA of the 50S subunit in the ribosome. The chain is Small ribosomal subunit protein uS15 from Clostridium novyi (strain NT).